A 277-amino-acid polypeptide reads, in one-letter code: 3-methyl-2-oxobutanoate hydroxymethyltransferase (277 aa).

Mg(2+) is bound by residues Asp-42 and Asp-81. Residues 42 to 43, Asp-81, and Lys-110 contribute to the 3-methyl-2-oxobutanoate site; that span reads DS. A Mg(2+)-binding site is contributed by Glu-112. Glu-179 (proton acceptor) is an active-site residue.

It belongs to the PanB family. In terms of assembly, homodecamer; pentamer of dimers. It depends on Mg(2+) as a cofactor.

It localises to the cytoplasm. It carries out the reaction 3-methyl-2-oxobutanoate + (6R)-5,10-methylene-5,6,7,8-tetrahydrofolate + H2O = 2-dehydropantoate + (6S)-5,6,7,8-tetrahydrofolate. It functions in the pathway cofactor biosynthesis; (R)-pantothenate biosynthesis; (R)-pantoate from 3-methyl-2-oxobutanoate: step 1/2. Its function is as follows. Catalyzes the reversible reaction in which hydroxymethyl group from 5,10-methylenetetrahydrofolate is transferred onto alpha-ketoisovalerate to form ketopantoate. The sequence is that of 3-methyl-2-oxobutanoate hydroxymethyltransferase from Anaplasma marginale (strain St. Maries).